A 478-amino-acid chain; its full sequence is MSPQTETKASAGFKAGVKDYKLNYYTPEYETKDTDILAAFRVTPQPGVPPEEAGAAVAAESSTGTWTTVWTDGLTSLDRYKGRCYHIEPVAGEENQFIAYIAYPLDLFEEGSVTNMFTSIVGNVFGFKALRALRLEDLRIPPAYSKTFQGPPHGIQVERDKLNKYGRPLLGCTIKPKLGLSAKNYGRAVYECLRGGLDFTKDDENVNSQPFMRWRDRFLFCAEAIYKAQAETGEIKGHYLNATAGTCEEMIKRAVFARELGVPIVMHDYLTGGFTANTSLAYYCRDNGLLLHIHRAMHAVIDRQKNHGMHFRVLAKALRMSGGDHVHSGTVVGKLEGEREMTLGFVDLLRDDFIEKDRSRGIFFTQDWVSMPGVLPVASGGIHVWHMPALTEIFGDDSVLQFGGGTLGHPWGNAPGAVANRVALEACVKARNEGRDLAREGNEIIREACNWSPELAAACEVWKEIKFEYEPVDKLDVK.

A propeptide spanning residues 1-2 is cleaved from the precursor; sequence MS. Proline 3 is modified (N-acetylproline). An N6,N6,N6-trimethyllysine modification is found at lysine 14. Substrate is bound by residues asparagine 123 and threonine 173. Lysine 175 acts as the Proton acceptor in catalysis. Residue lysine 177 coordinates substrate. Residues lysine 201, aspartate 203, and glutamate 204 each coordinate Mg(2+). Lysine 201 carries the N6-carboxylysine modification. Histidine 294 acts as the Proton acceptor in catalysis. The substrate site is built by arginine 295, histidine 327, and serine 379.

Belongs to the RuBisCO large chain family. Type I subfamily. As to quaternary structure, heterohexadecamer of 8 large chains and 8 small chains; disulfide-linked. The disulfide link is formed within the large subunit homodimers. Mg(2+) is required as a cofactor. The disulfide bond which can form in the large chain dimeric partners within the hexadecamer appears to be associated with oxidative stress and protein turnover.

The protein localises to the plastid. The protein resides in the chloroplast. The catalysed reaction is 2 (2R)-3-phosphoglycerate + 2 H(+) = D-ribulose 1,5-bisphosphate + CO2 + H2O. The enzyme catalyses D-ribulose 1,5-bisphosphate + O2 = 2-phosphoglycolate + (2R)-3-phosphoglycerate + 2 H(+). In terms of biological role, ruBisCO catalyzes two reactions: the carboxylation of D-ribulose 1,5-bisphosphate, the primary event in carbon dioxide fixation, as well as the oxidative fragmentation of the pentose substrate in the photorespiration process. Both reactions occur simultaneously and in competition at the same active site. This Lemna minor (Common duckweed) protein is Ribulose bisphosphate carboxylase large chain.